We begin with the raw amino-acid sequence, 302 residues long: Short-chain dehydrogenase/reductase 3 (302 aa).

The next 4 helical transmembrane spans lie at 9–29 (LVVF…GLVL), 170–190 (IVCL…DYCT), 195–215 (AFAF…VSAT), and 253–273 (AVQL…LIIL). A substrate-binding site is contributed by serine 175. Catalysis depends on tyrosine 188, which acts as the Proton acceptor.

This sequence belongs to the short-chain dehydrogenases/reductases (SDR) family. In terms of tissue distribution, in the retina, expressed in cone but not rod outer segments.

Its subcellular location is the membrane. It carries out the reaction all-trans-retinol + NADP(+) = all-trans-retinal + NADPH + H(+). Catalyzes the reduction of all-trans-retinal to all-trans-retinol in the presence of NADPH. In Bos taurus (Bovine), this protein is Short-chain dehydrogenase/reductase 3 (DHRS3).